The following is a 61-amino-acid chain: Photosystem II reaction center protein K (61 aa).

A propeptide spanning residues methionine 1 to alanine 24 is cleaved from the precursor. The helical transmembrane segment at methionine 40 to phenylalanine 60 threads the bilayer.

The protein belongs to the PsbK family. As to quaternary structure, PSII is composed of 1 copy each of membrane proteins PsbA, PsbB, PsbC, PsbD, PsbE, PsbF, PsbH, PsbI, PsbJ, PsbK, PsbL, PsbM, PsbT, PsbX, PsbY, PsbZ, Psb30/Ycf12, at least 3 peripheral proteins of the oxygen-evolving complex and a large number of cofactors. It forms dimeric complexes.

It is found in the plastid. The protein resides in the chloroplast thylakoid membrane. One of the components of the core complex of photosystem II (PSII). PSII is a light-driven water:plastoquinone oxidoreductase that uses light energy to abstract electrons from H(2)O, generating O(2) and a proton gradient subsequently used for ATP formation. It consists of a core antenna complex that captures photons, and an electron transfer chain that converts photonic excitation into a charge separation. The chain is Photosystem II reaction center protein K from Morus indica (Mulberry).